Reading from the N-terminus, the 484-residue chain is Ribosomal RNA small subunit methyltransferase F (484 aa).

Residues 126-132 (AAAPGSK), glutamate 150, aspartate 177, and aspartate 195 each bind S-adenosyl-L-methionine. The active-site Nucleophile is cysteine 248.

This sequence belongs to the class I-like SAM-binding methyltransferase superfamily. RsmB/NOP family.

It is found in the cytoplasm. The enzyme catalyses cytidine(1407) in 16S rRNA + S-adenosyl-L-methionine = 5-methylcytidine(1407) in 16S rRNA + S-adenosyl-L-homocysteine + H(+). Functionally, specifically methylates the cytosine at position 1407 (m5C1407) of 16S rRNA. This is Ribosomal RNA small subunit methyltransferase F from Pectobacterium carotovorum subsp. carotovorum (strain PC1).